The sequence spans 266 residues: UPF0246 protein PHZ_c0561 (266 aa).

Positions D245–D266 are disordered.

It belongs to the UPF0246 family.

The sequence is that of UPF0246 protein PHZ_c0561 from Phenylobacterium zucineum (strain HLK1).